A 130-amino-acid chain; its full sequence is Small ribosomal subunit protein uS8 (130 aa).

The protein belongs to the universal ribosomal protein uS8 family. In terms of assembly, part of the 30S ribosomal subunit.

Functionally, one of the primary rRNA binding proteins, it binds directly to 16S rRNA central domain where it helps coordinate assembly of the platform of the 30S subunit. This chain is Small ribosomal subunit protein uS8, found in Nitrosopumilus maritimus (strain SCM1).